Here is a 396-residue protein sequence, read N- to C-terminus: Histidine-rich glycoprotein (396 aa).

2 Cystatin domains span residues 1–102 (AVNP…SALT) and 103–169 (NMRA…RFSA). Disulfide bonds link cysteine 7/cysteine 375, cysteine 56/cysteine 67, cysteine 77/cysteine 92, cysteine 123/cysteine 297, cysteine 137/cysteine 160, and cysteine 212/cysteine 242. N-linked (GlcNAc...) asparagine; partial glycosylation is present at asparagine 70. N-linked (GlcNAc...) asparagine glycosylation is found at asparagine 91 and asparagine 122. A disordered region spans residues 176–322 (RPFHSGEHEH…GPGKGHFRFH (147 aa)). Over residues 197–208 (GSKDHGHPHESY) the composition is skewed to basic and acidic residues. The N-linked (GlcNAc...) asparagine glycan is linked to asparagine 220. The span at 233-246 (LPFPPPGLRCPHPP) shows a compositional bias: pro residues. The segment covering 255–265 (PPHDHSSDEHH) has biased composition (basic and acidic residues). Residues 266–284 (PHGHHPHGHHPHGHHPHGH) show a composition bias toward basic residues. Over residues 285-296 (HPPDNDFYDHGP) the composition is skewed to basic and acidic residues. Residues 304–322 (PPPRHSKERGPGKGHFRFH) are compositionally biased toward basic residues. Residue serine 309 is modified to Phosphoserine.

Interacts (via the HRR domain) with TPM1; the interaction appears to contribute to the antiangiogenic properties of the HRR domain. Interacts with THBS1 (via the TSP type I repeats); the interaction blocks the antiangiogenic effect of THBS1 with CD36. Interacts with PLG (via its Kringle domains); the interaction tethers PLG to the cell surface and enhances its activation. Interacts with THBS2; the interaction blocks the antiangiogenic effect of THBS2 with CD36. Interacts with HPSE; the interaction is enhanced at acidic pH, partially inhibits binding of HPSE to cell surface receptors and modulates its enzymatic activity. Interacts (via the HRR domain) with TMP1; the interaction partially mediates the antiangiogenic properties of HRG. Interacts with kappa and lambda light chains of IgG molecules. Interacts with ATP5F1A; the interaction occurs on the surface of T-cells and alters their cell morphology in concert with CONA. Binds IgG molecules containing kappa and lambda light chains and inhibits the formation of insoluble immunoglobulin complexes. Interacts with F12; the interaction, which is enhanced in the presence of zinc ions and inhibited by heparin-binding to HRG, inhibits factor XII autoactivation and contact-initiated coagulation. N-glycosylated. Post-translationally, proteolytic cleavage produces several HRG fragments which are mostly disulfide-linked and, therefore, not released. On platelet activation, may release a 33 kDa antiangiogenic peptide which encompasses the HRR.

It localises to the secreted. Plasma glycoprotein that binds a number of ligands such as heme, heparin, heparan sulfate, thrombospondin, plasminogen, and divalent metal ions. Inhibits rosette formation. Acts as an adapter protein and implicated in regulating many processes such as immune complex and pathogen clearance, cell adhesion, angiogenesis, coagulation and fibrinolysis. Mediates clearance of necrotic cells through enhancing the phagocytosis of necrotic cells in a heparan sulfate-dependent pathway. This process can be regulated by the presence of certain HRG ligands such as heparin and zinc ions. Binds to IgG subclasses of immunoglobins containing kappa and lambda light chains with different affinities regulating their clearance and inhibiting the formation of insoluble immune complexes. Tethers plasminogen to the cell surface. Binds T-cells and alters the cell morphology. Modulates angiogenesis by blocking the CD6-mediated antiangiongenic effect of thrombospondins, THBS1 and THBS2. This Bos taurus (Bovine) protein is Histidine-rich glycoprotein (HRG).